The following is a 539-amino-acid chain: MLVPVLTLLGTLTATGTLVYHFDERLPVVRFRLLTTFLVLSSGQLLLYALWKVFLKPLCFSPFKHLPKPPLDQWPLWRDHEDGQRGGRAQVGIIHCRGILNGERLIVSSPTALAKIASDNYTFIKPMAIKLLAGRVLGMGLVLTERDEHKQQRKLFLPPFAPKHIRDLYPTFWRKSREVTERMGDEIHATGAGNGVFEIGEWAARVALDIITLSTMGKDFGSVRDADAPLAKVYHTVLQPTLGHVVIAVLKNFLPARLVEALPLRSNRHQGDAYDTIRGVCRDLLREKKDQLAGHHLGGKDILSVCLRYEDIAGVDEEEVINQMTTILGAGHETISVGITWAIYMLCLHRDWQARLREEVRATLPSPDRAQESASSADVERMPLMRAFLEEVLRWYPPIPMTMREPLVDTELDGQYVPRGTRIVVPIKAINREERYWGPDAKRFSPSRWLKNDREFNPSGGVSSKYGYLSFMHGPRSCVASEFARAEMACVVSAWVGRFDLDLSDEHFRDEENMRTSNGNFSGKPLEGLYVRAQVLEGW.

An N-terminal signal peptide occupies residues 1-16; that stretch reads MLVPVLTLLGTLTATG. Residue Asn120 is glycosylated (N-linked (GlcNAc...) asparagine). A heme-binding site is contributed by Cys478. An N-linked (GlcNAc...) asparagine glycan is attached at Asn520.

The protein belongs to the cytochrome P450 family. Heme is required as a cofactor.

It functions in the pathway mycotoxin biosynthesis. Functionally, cytochrome P450 monooxygenase; part of the gene cluster that mediates the biosynthesis of burnettramic acids, an unusual class of bolaamphiphilic pyrrolizidinediones that display potent antibacterial, antifungal, and cytotoxic activities. The first step of the biosynthesis of burnettramic acids is the hydroxylation of proline by the proline hydroxylase buaE to generate 4-hydroxyproline. The PKS-NRPS buaA and trans-enoyl reductase buaC construct the highly reduced polyketide chain, and the condensation (C) domain of buaA then catalyzes the amide bond formation with the activated 4-hydroxyproline. This is followed by the R domain releasing the nascent polyketide-peptide directly via a Dieckmann condensation to afford a tetramic acid fused to the hydroxyproline, generating the bicyclic pyrrolidinedione moiety. The cytochrome P450 monooxygenases buaD and buaG are likely responsible for the multiple hydroxylations on the polyketide chain and its terminus, although in the heterologous context, buaD does not appear to be required. Therefore, while buaG may be a multifunctional cytochrome P450 monooxygenase, it cannot be ruled out that the two secondary alcohols on the polyketide chain could have an acetate origin. Finally, the glycosyltransferase buaB transfers beta-D-mannose to the aglycone burnettramic acid A to form burnettramic acid A. Burnettramic acid B is a minor cis-pyrrolizidine epimer of burnettramic acid A and it is likely that small amounts of it form naturally in acidic environments. This Petromyces alliaceus (Aspergillus alliaceus) protein is Cytochrome P450 monooxygenase buaD.